A 67-amino-acid chain; its full sequence is DNA-directed RNA polymerase subunit Rpo10 (67 aa).

The Zn(2+) site is built by C7, C10, C44, and C45.

This sequence belongs to the archaeal Rpo10/eukaryotic RPB10 RNA polymerase subunit family. Part of the RNA polymerase complex. It depends on Zn(2+) as a cofactor.

It is found in the cytoplasm. The catalysed reaction is RNA(n) + a ribonucleoside 5'-triphosphate = RNA(n+1) + diphosphate. Functionally, DNA-dependent RNA polymerase (RNAP) catalyzes the transcription of DNA into RNA using the four ribonucleoside triphosphates as substrates. In Caldivirga maquilingensis (strain ATCC 700844 / DSM 13496 / JCM 10307 / IC-167), this protein is DNA-directed RNA polymerase subunit Rpo10.